The sequence spans 478 residues: V-type proton ATPase subunit H (478 aa).

Belongs to the V-ATPase H subunit family. As to quaternary structure, V-ATPase is a heteromultimeric enzyme composed of a peripheral catalytic V1 complex (components A to H) attached to an integral membrane V0 proton pore complex (components: a, c, c', c'', d, e, f and VOA1). Interacts with YND1.

It is found in the vacuole membrane. Its function is as follows. Subunit of the V1 complex of vacuolar(H+)-ATPase (V-ATPase), a multisubunit enzyme composed of a peripheral complex (V1) that hydrolyzes ATP and a membrane integral complex (V0) that translocates protons. V-ATPase is responsible for acidifying and maintaining the pH of intracellular compartments. This subunit is essential for activity, but not assembly, of the enzyme complex. This subunit is also required for silencing the ATPase activity of V-ATPase when V1 is detached from V0. The chain is V-type proton ATPase subunit H from Saccharomyces cerevisiae (strain ATCC 204508 / S288c) (Baker's yeast).